Consider the following 599-residue polypeptide: Elongation factor 4 (599 aa).

In terms of domain architecture, tr-type G spans 2–184; sequence KNIRNFSIIA…RLVRDIPPPE (183 aa). GTP-binding positions include 14–19 and 131–134; these read DHGKST and NKID.

Belongs to the TRAFAC class translation factor GTPase superfamily. Classic translation factor GTPase family. LepA subfamily.

Its subcellular location is the cell inner membrane. The catalysed reaction is GTP + H2O = GDP + phosphate + H(+). Its function is as follows. Required for accurate and efficient protein synthesis under certain stress conditions. May act as a fidelity factor of the translation reaction, by catalyzing a one-codon backward translocation of tRNAs on improperly translocated ribosomes. Back-translocation proceeds from a post-translocation (POST) complex to a pre-translocation (PRE) complex, thus giving elongation factor G a second chance to translocate the tRNAs correctly. Binds to ribosomes in a GTP-dependent manner. The polypeptide is Elongation factor 4 (Shigella dysenteriae serotype 1 (strain Sd197)).